The primary structure comprises 502 residues: ATP synthase subunit alpha (502 aa).

A disordered region spans residues 115-135 (VDGLGPINTTNTRPIESPAPG). 169–176 (GDRQTGKT) contributes to the ATP binding site.

Belongs to the ATPase alpha/beta chains family. In terms of assembly, F-type ATPases have 2 components, CF(1) - the catalytic core - and CF(0) - the membrane proton channel. CF(1) has five subunits: alpha(3), beta(3), gamma(1), delta(1), epsilon(1). CF(0) has three main subunits: a(1), b(2) and c(9-12). The alpha and beta chains form an alternating ring which encloses part of the gamma chain. CF(1) is attached to CF(0) by a central stalk formed by the gamma and epsilon chains, while a peripheral stalk is formed by the delta and b chains.

Its subcellular location is the cell membrane. It catalyses the reaction ATP + H2O + 4 H(+)(in) = ADP + phosphate + 5 H(+)(out). Produces ATP from ADP in the presence of a proton gradient across the membrane. The alpha chain is a regulatory subunit. The chain is ATP synthase subunit alpha from Bacillus cereus (strain B4264).